The chain runs to 154 residues: Putative pre-16S rRNA nuclease (154 aa).

Belongs to the YqgF nuclease family.

It localises to the cytoplasm. In terms of biological role, could be a nuclease involved in processing of the 5'-end of pre-16S rRNA. This is Putative pre-16S rRNA nuclease from Ruegeria pomeroyi (strain ATCC 700808 / DSM 15171 / DSS-3) (Silicibacter pomeroyi).